A 687-amino-acid polypeptide reads, in one-letter code: Glycine--tRNA ligase beta subunit (687 aa).

This sequence belongs to the class-II aminoacyl-tRNA synthetase family. As to quaternary structure, tetramer of two alpha and two beta subunits.

It localises to the cytoplasm. It carries out the reaction tRNA(Gly) + glycine + ATP = glycyl-tRNA(Gly) + AMP + diphosphate. This chain is Glycine--tRNA ligase beta subunit, found in Neisseria meningitidis serogroup C (strain 053442).